Reading from the N-terminus, the 111-residue chain is Large ribosomal subunit protein uL23 (111 aa).

This sequence belongs to the universal ribosomal protein uL23 family. As to quaternary structure, part of the 50S ribosomal subunit. Contacts protein L29, and trigger factor when it is bound to the ribosome.

Functionally, one of the early assembly proteins it binds 23S rRNA. One of the proteins that surrounds the polypeptide exit tunnel on the outside of the ribosome. Forms the main docking site for trigger factor binding to the ribosome. The sequence is that of Large ribosomal subunit protein uL23 from Nitrosomonas europaea (strain ATCC 19718 / CIP 103999 / KCTC 2705 / NBRC 14298).